We begin with the raw amino-acid sequence, 980 residues long: Serine/threonine-protein phosphatase 4 regulatory subunit 3 (980 aa).

The WH1 domain occupies 1–105 (MTTDTRRRVK…EKICQVQGKD (105 aa)). Disordered stretches follow at residues 640–668 (RDKM…RQME), 695–861 (VSEK…SLCD), and 885–980 (VTAA…ARQA). Residues 695-708 (VSEKNGPQTQNQQK) are compositionally biased toward polar residues. Composition is skewed to low complexity over residues 709-749 (SSPP…SSSP), 757-789 (QTQA…QQTQ), 803-859 (EAPQ…AASL), and 885-926 (VTAA…SPAS). Residues 929 to 939 (QDANSTEGTSS) show a composition bias toward polar residues. Residues 940-951 (EADKTTAKKGLV) are compositionally biased toward basic and acidic residues. Acidic residues predominate over residues 953–968 (YESDSGEDDYEEDEYS).

It belongs to the SMEK family. Serine/threonine-protein phosphatase 4 (PP4) occurs in different assemblies of the catalytic and one or more regulatory subunits. Probably part of a PP4 PPP4C-PPP4R2-PPP4R3 complex containing Pp4-19C, PPP4R2r and flfl. Interacts with mira. As to expression, expressed in neuroblasts.

The protein localises to the nucleus. Its subcellular location is the membrane. It is found in the cytoplasm. In terms of biological role, regulatory subunit of serine/threonine-protein phosphatase 4. The probable PP4 complex Pp4-19C-PPP4R2r-flfl (PPP4C-PPP4R2-PPP4R3) is required to prevent caspase induced cell death (in vitro). May be involved in DNA damage repair. Key mediator specific for the localization of mira and associated cell fate determinants during both interphase and mitosis. Nuclear Flfl is required to exclude mira/pros from the nucleus when inefficiently bound to the cytoskeleton/cortex, whereas cytosolic or membrane-associated flfl is required for the cortical association and asymmetric localization of mira/pros/brat/stau at metaphase and anaphase. The polypeptide is Serine/threonine-protein phosphatase 4 regulatory subunit 3 (flfl) (Drosophila melanogaster (Fruit fly)).